A 975-amino-acid chain; its full sequence is Glycine dehydrogenase (decarboxylating) (975 aa).

Lys723 is subject to N6-(pyridoxal phosphate)lysine.

The protein belongs to the GcvP family. The glycine cleavage system is composed of four proteins: P, T, L and H. Requires pyridoxal 5'-phosphate as cofactor.

It carries out the reaction N(6)-[(R)-lipoyl]-L-lysyl-[glycine-cleavage complex H protein] + glycine + H(+) = N(6)-[(R)-S(8)-aminomethyldihydrolipoyl]-L-lysyl-[glycine-cleavage complex H protein] + CO2. In terms of biological role, the glycine cleavage system catalyzes the degradation of glycine. The P protein binds the alpha-amino group of glycine through its pyridoxal phosphate cofactor; CO(2) is released and the remaining methylamine moiety is then transferred to the lipoamide cofactor of the H protein. The sequence is that of Glycine dehydrogenase (decarboxylating) from Burkholderia pseudomallei (strain 668).